The following is a 631-amino-acid chain: Peptidyl-prolyl cis-trans isomerase CYP71 (631 aa).

Residues 26-45 form a disordered region; sequence VEEEEPMVGPGPAPRGKRKR. WD repeat units lie at residues 68–106, 111–150, 201–240, and 257–297; these read MHRD…IEFA, SHLG…MMAM, IHMN…FPED, and KCKT…RRVY. In terms of domain architecture, PPIase cyclophilin-type spans 474–628; that stretch reads LPENVIMHTT…QDVKILNVTV (155 aa).

The protein belongs to the cyclophilin-type PPIase family. Interacts with FAS1 and LHP1. Interacts (via WD repeat domain) with histone H3. As to expression, ubiquitous. Expressed in the meristems.

The protein localises to the nucleus. It carries out the reaction [protein]-peptidylproline (omega=180) = [protein]-peptidylproline (omega=0). PPIases accelerate the folding of proteins. It catalyzes the cis-trans isomerization of proline imidic peptide bonds in oligopeptides. Histone proline isomerase that increases the rate of cis-trans isomerization of the synthetic histone H3 peptides H3P30 (RKSAP30F-p-nitroanilide) and H3P30K27me3 (RKme3-SAP30F-p-nitroanilide) in the histone H3 N-terminal tail, in vitro. Histone remodeling factor involved in chromatin-based gene silencing. Reinforces H3K27 methylation. Involved in fundamental processes of chromatin assembly and histone modification by mediating the targeting of FAS1 and LHP1 on the chromatin. Required for the formation and development of leaves, for normal phyllotaxy and for the formation, maintenance and activity of root and shoot apical meristems. The polypeptide is Peptidyl-prolyl cis-trans isomerase CYP71 (Arabidopsis thaliana (Mouse-ear cress)).